The chain runs to 365 residues: Aminomethyltransferase (365 aa).

This sequence belongs to the GcvT family. The glycine cleavage system is composed of four proteins: P, T, L and H.

The enzyme catalyses N(6)-[(R)-S(8)-aminomethyldihydrolipoyl]-L-lysyl-[protein] + (6S)-5,6,7,8-tetrahydrofolate = N(6)-[(R)-dihydrolipoyl]-L-lysyl-[protein] + (6R)-5,10-methylene-5,6,7,8-tetrahydrofolate + NH4(+). Its function is as follows. The glycine cleavage system catalyzes the degradation of glycine. In Yersinia pestis bv. Antiqua (strain Antiqua), this protein is Aminomethyltransferase.